A 292-amino-acid polypeptide reads, in one-letter code: Hypersensitive-induced response protein 4 (292 aa).

Residue Gly-2 is the site of N-myristoyl glycine attachment.

In terms of assembly, self-interacts and forms heteromers. Interacts with NB-LRR class of R proteins before R proteins (e.g. RPS2 or RPM1) are activated by the effectors.

Its subcellular location is the cell membrane. This chain is Hypersensitive-induced response protein 4 (HIR4), found in Arabidopsis thaliana (Mouse-ear cress).